The chain runs to 177 residues: Large ribosomal subunit protein uL6 (177 aa).

It belongs to the universal ribosomal protein uL6 family. In terms of assembly, part of the 50S ribosomal subunit.

In terms of biological role, this protein binds to the 23S rRNA, and is important in its secondary structure. It is located near the subunit interface in the base of the L7/L12 stalk, and near the tRNA binding site of the peptidyltransferase center. The polypeptide is Large ribosomal subunit protein uL6 (Marinomonas sp. (strain MWYL1)).